A 136-amino-acid chain; its full sequence is S-protein homolog 6 (136 aa).

Positions 1 to 17 (MFIIIFIVLISLIGCET) are cleaved as a signal peptide. N-linked (GlcNAc...) asparagine glycosylation is found at asparagine 76 and asparagine 108.

This sequence belongs to the plant self-incompatibility (S1) protein family.

The protein localises to the secreted. The sequence is that of S-protein homolog 6 from Arabidopsis thaliana (Mouse-ear cress).